We begin with the raw amino-acid sequence, 299 residues long: tRNA uridine(34) hydroxylase (299 aa).

The Rhodanese domain occupies 132–226; it reads AGRPVVMLDT…YFEEVGGAHY (95 aa). Catalysis depends on cysteine 186, which acts as the Cysteine persulfide intermediate.

Belongs to the TrhO family.

It catalyses the reaction uridine(34) in tRNA + AH2 + O2 = 5-hydroxyuridine(34) in tRNA + A + H2O. Catalyzes oxygen-dependent 5-hydroxyuridine (ho5U) modification at position 34 in tRNAs. This chain is tRNA uridine(34) hydroxylase, found in Burkholderia mallei (strain NCTC 10247).